We begin with the raw amino-acid sequence, 601 residues long: Multidrug and toxin extrusion protein 2 (601 aa).

Over methionine 1–alanine 62 the chain is Cytoplasmic. The chain crosses the membrane as a helical span at residues leucine 63–valine 83. At glycine 84 to glutamate 95 the chain is on the extracellular side. Residues leucine 96–glycine 116 traverse the membrane as a helical segment. Over leucine 117–serine 145 the chain is Cytoplasmic. Residues leucine 146–leucine 166 form a helical membrane-spanning segment. Residues leucine 167–tyrosine 182 lie on the Extracellular side of the membrane. A helical membrane pass occupies residues alanine 183–leucine 203. At glutamine 204–glutamine 212 the chain is on the cytoplasmic side. A helical membrane pass occupies residues valine 213–valine 233. The Extracellular segment spans residues leucine 234–serine 241. A helical membrane pass occupies residues alanine 242–leucine 262. Residues lysine 263–tryptophan 281 are Cytoplasmic-facing. Residues glycine 282 to alanine 301 form a helical membrane-spanning segment. At tyrosine 302–glutamine 320 the chain is on the extracellular side. A helical membrane pass occupies residues alanine 321–valine 341. Topologically, residues cysteine 342–alanine 361 are cytoplasmic. A helical transmembrane segment spans residues valine 362–leucine 382. Topologically, residues asparagine 383 to glutamine 402 are extracellular. Residues valine 403 to valine 423 traverse the membrane as a helical segment. The Cytoplasmic portion of the chain corresponds to leucine 424 to asparagine 437. The helical transmembrane segment at alanine 438–methionine 458 threads the bilayer. Position 459 (arginine 459) is a topological domain, extracellular. Residues isoleucine 460 to valine 480 form a helical membrane-spanning segment. Topologically, residues tyrosine 481 to arginine 577 are cytoplasmic. Residues glycine 578 to threonine 598 traverse the membrane as a helical segment. Residues threonine 599–tyrosine 601 are Extracellular-facing.

It belongs to the multi antimicrobial extrusion (MATE) (TC 2.A.66.1) family. In terms of tissue distribution, expressed in renal cortical tissues.

Its subcellular location is the cell membrane. The protein localises to the apical cell membrane. It carries out the reaction thiamine(out) + H(+)(in) = thiamine(in) + H(+)(out). It catalyses the reaction estrone 3-sulfate(in) + H(+)(out) = estrone 3-sulfate(out) + H(+)(in). The catalysed reaction is creatinine(in) + H(+)(out) = creatinine(out) + H(+)(in). Multidrug efflux pump that functions as a H(+)/organic cation antiporter. Mediates the efflux of cationic compounds, such as the model cations, tetraethylammonium (TEA) and 1-methyl-4-phenylpyridinium (MPP+), the platinum-based drug oxaliplatin or weak bases that are positively charged at physiological pH, cimetidine or the antidiabetic drug metformin. Mediates the efflux of the endogenous compounds creatinine, thiamine and estrone-3-sulfate. Plays a physiological role in the excretion of drugs, toxins and endogenous metabolites through the kidney. The sequence is that of Multidrug and toxin extrusion protein 2 (SLC47A2) from Oryctolagus cuniculus (Rabbit).